The following is a 367-amino-acid chain: THO complex subunit 6 (367 aa).

WD repeat units lie at residues 23-67 (IETR…SQSA), 88-129 (AHEG…ESDV), 157-196 (SPMP…IKMT), 199-240 (GHSD…KVIG), 243-283 (DKKS…CVQT), 285-322 (PIPA…LSQI), and 324-363 (CAPC…CTFR).

This sequence belongs to the WD repeat THOC6 family. As to quaternary structure, component of the THO complex, which is composed of THO1, THO2, THO3, THO5, THO6 and THO7. Interacts with ABI5, DDB1A and DWA2.

Its subcellular location is the nucleus. The protein operates within protein modification; protein ubiquitination. Its function is as follows. Acts as a component of the THO subcomplex of the TREX complex which is thought to couple mRNA transcription, processing and nuclear export. In terms of biological role, component of the CUL4-RBX1-DDB1-DWA1/DWA2 E3 ubiquitin-protein ligase complex that acts as a negative regulator in abscisic acid (ABA) signaling. May function as the substrate recognition module within this complex leading to ABI5 degradation. Functionally redundant with DWA2. The protein is THO complex subunit 6 (THO6) of Arabidopsis thaliana (Mouse-ear cress).